Here is a 363-residue protein sequence, read N- to C-terminus: MEFEHRPVLLAPTVDALLLADFAGKGAARSGRQDGAQADARAQRGVFVDGTFGRGGHSRELLRRLGPEARLVVFDKDPQAIAVANELAAGDARVTVVHGGFAAMREELAARGIESIDGVMLDLGVSSPQLDDAGRGFSFMREGPLDMRMDTTRGPTVADWLAQASVDEMREVIADYGEERFAFQVAKAIAARRATRPLRTTLELAECVASAVRTREKGQHPATRTFQALRIYINRELEELSRALASALELLAPGGRLAVISFHSLEDRMVKQCIAAAARPAVAHARLPLRESELPQPLYRSLGRVQADDEEIAGNARARSAVLRVAERTTEPLGADGAAAFVPAMRVPGEAAPARRGARRRPH.

S-adenosyl-L-methionine contacts are provided by residues 55 to 57, aspartate 75, aspartate 122, and glutamine 129; that span reads GGH.

Belongs to the methyltransferase superfamily. RsmH family.

It localises to the cytoplasm. The catalysed reaction is cytidine(1402) in 16S rRNA + S-adenosyl-L-methionine = N(4)-methylcytidine(1402) in 16S rRNA + S-adenosyl-L-homocysteine + H(+). Specifically methylates the N4 position of cytidine in position 1402 (C1402) of 16S rRNA. This is Ribosomal RNA small subunit methyltransferase H from Bordetella petrii (strain ATCC BAA-461 / DSM 12804 / CCUG 43448).